A 143-amino-acid polypeptide reads, in one-letter code: Large ribosomal subunit protein uL13 (143 aa).

This sequence belongs to the universal ribosomal protein uL13 family. In terms of assembly, part of the 50S ribosomal subunit.

Functionally, this protein is one of the early assembly proteins of the 50S ribosomal subunit, although it is not seen to bind rRNA by itself. It is important during the early stages of 50S assembly. The chain is Large ribosomal subunit protein uL13 from Carboxydothermus hydrogenoformans (strain ATCC BAA-161 / DSM 6008 / Z-2901).